A 332-amino-acid polypeptide reads, in one-letter code: T-cell surface glycoprotein CD1b2 (332 aa).

A signal peptide spans 1–17; that stretch reads MLLLVLALLAVLFPAGD. At 18–301 the chain is on the extracellular side; the sequence is TQDAFPEPIS…ILYWGNSSIG (284 aa). N-linked (GlcNAc...) asparagine glycosylation is found at N38, N75, and N146. Intrachain disulfides connect C120/C184, C149/C163, and C224/C279. One can recognise an Ig-like domain in the interval 185-295; sequence PRYLMSVLEA…LGGQDIILYW (111 aa). A glycan (N-linked (GlcNAc...) asparagine) is linked at N297. Residues 302–322 form a helical membrane-spanning segment; that stretch reads WIILAVFVSCLIVLLFYVLWF. The Cytoplasmic segment spans residues 323 to 332; that stretch reads YKHWSYQDIL. The short motif at 328 to 331 is the Internalization signal element; the sequence is YQDI.

In terms of assembly, heterodimer with B2M (beta-2-microglobulin). Interacts with saposin C.

It is found in the cell membrane. The protein localises to the endosome membrane. It localises to the lysosome membrane. Its function is as follows. Antigen-presenting protein that binds self and non-self lipid and glycolipid antigens and presents them to T-cell receptors on natural killer T-cells. The sequence is that of T-cell surface glycoprotein CD1b2 (CD1B2) from Cavia porcellus (Guinea pig).